Here is a 398-residue protein sequence, read N- to C-terminus: Sphingosine 1-phosphate receptor 5 (398 aa).

Over 1 to 40 (MESGLLRPAPVSEVIVLHYNYTGKLRGARYQPGAGLRADA) the chain is Extracellular. Asn-20 carries N-linked (GlcNAc...) asparagine glycosylation. A helical transmembrane segment spans residues 41 to 61 (VVCLAVCAFIVLENLAVLLVL). Residues 62–70 (GRHPRFHAP) are Cytoplasmic-facing. The chain crosses the membrane as a helical span at residues 71–91 (MFLLLGSLTLSDLLAGAAYAA). Residues 92-111 (NILLSGPLTLKLSPALWFAR) are Extracellular-facing. The helical transmembrane segment at 112–132 (EGGVFVALTASVLSLLAIALE) threads the bilayer. At 133–151 (RSLTMARRGPAPVSSRGRT) the chain is on the cytoplasmic side. The chain crosses the membrane as a helical span at residues 152–172 (LAMAAAAWGVSLLLGLLPALG). Residues 173–192 (WNCLGRLDACSTVLPLYAKA) are Extracellular-facing. A helical transmembrane segment spans residues 193–213 (YVLFCVLAFVGILAAICALYA). Over 214 to 252 (RIYCQVRANARRLPARPGTAGTTSTRARRKPRSLALLRT) the chain is Cytoplasmic. Residues 253-273 (LSVVLLAFVACWGPLFLLLLL) form a helical membrane-spanning segment. Topologically, residues 274–287 (DVACPARTCPVLLQ) are extracellular. Residues 288-308 (ADPFLGLAMANSLLNPIIYTL) form a helical membrane-spanning segment. Residues 309 to 398 (TNRDLRHALL…RTLVSEPAAD (90 aa)) lie on the Cytoplasmic side of the membrane. Cys-323 carries S-palmitoyl cysteine lipidation. A disordered region spans residues 329 to 398 (GRDPSGSQQS…RTLVSEPAAD (70 aa)). A compositionally biased stretch (low complexity) spans 333 to 347 (SGSQQSASAAEASGG). Ser-381 is modified (phosphoserine).

The protein belongs to the G-protein coupled receptor 1 family. Widely expressed in the brain, most prominently in the corpus callosum, which is predominantly white matter. Detected in spleen, peripheral blood leukocytes, placenta, lung, aorta and fetal spleen. Low-level signal detected in many tissue extracts. Overexpressed in leukemic large granular lymphocytes. Isoform 1 is predominantly expressed in peripheral tissues. Isoform 2 is expressed in brain, spleen and peripheral blood leukocytes.

It localises to the cell membrane. Receptor for the lysosphingolipid sphingosine 1-phosphate (S1P). S1P is a bioactive lysophospholipid that elicits diverse physiological effect on most types of cells and tissues. Is coupled to both the G(i/0)alpha and G(12) subclass of heteromeric G-proteins. May play a regulatory role in the transformation of radial glial cells into astrocytes and may affect proliferative activity of these cells. The protein is Sphingosine 1-phosphate receptor 5 (S1PR5) of Homo sapiens (Human).